The sequence spans 145 residues: Small ribosomal subunit protein uS19 (145 aa).

N-acetylalanine is present on A2. K108 participates in a covalent cross-link: Glycyl lysine isopeptide (Lys-Gly) (interchain with G-Cter in SUMO2).

The protein belongs to the universal ribosomal protein uS19 family. In terms of assembly, component of the small ribosomal subunit.

Its subcellular location is the cytoplasm. In terms of biological role, component of the small ribosomal subunit. The ribosome is a large ribonucleoprotein complex responsible for the synthesis of proteins in the cell. This chain is Small ribosomal subunit protein uS19 (RPS15), found in Mesocricetus auratus (Golden hamster).